Reading from the N-terminus, the 366-residue chain is Protein lifeguard 1 (366 aa).

The tract at residues 1-141 (MSHEKSFLVS…GPPSYYDNQD (141 aa)) is disordered. Composition is skewed to pro residues over residues 14–44 (YPPPNPGYPGGPQPSMAPYPGAPYPQAPFQP) and 67–109 (GPYP…PNPY). 7 helical membrane-spanning segments follow: residues 160–180 (VFLVLTLQLSVTLSTVAVFTF), 192–212 (VWTYYVSYAIFFVSLIVLSCC), 223–243 (LVALSILTVSLSYMVGMIASF), 248–268 (AVIMAVGITTTVCFTVVIFSM), 278–298 (VGVLLVSVVVLILFAILCIFI), 302–322 (VLEIVYASLGALLFTCFLAVD), and 341–361 (FAALNLYTDIINIFLYILTII).

The protein belongs to the BI1 family. LFG subfamily.

It is found in the membrane. Its function is as follows. Potential apoptotic regulator. This chain is Protein lifeguard 1 (GRINA), found in Bos taurus (Bovine).